A 169-amino-acid polypeptide reads, in one-letter code: NADH-quinone oxidoreductase subunit I (169 aa).

2 consecutive 4Fe-4S ferredoxin-type domains span residues 61-90 (RKYK…IEAQ) and 100-129 (VRYD…EGPN). Positions 70, 73, 76, 80, 109, 112, 115, and 119 each coordinate [4Fe-4S] cluster.

The protein belongs to the complex I 23 kDa subunit family. As to quaternary structure, NDH-1 is composed of 14 different subunits. Subunits NuoA, H, J, K, L, M, N constitute the membrane sector of the complex. Requires [4Fe-4S] cluster as cofactor.

Its subcellular location is the cell inner membrane. The enzyme catalyses a quinone + NADH + 5 H(+)(in) = a quinol + NAD(+) + 4 H(+)(out). NDH-1 shuttles electrons from NADH, via FMN and iron-sulfur (Fe-S) centers, to quinones in the respiratory chain. The immediate electron acceptor for the enzyme in this species is believed to be ubiquinone. Couples the redox reaction to proton translocation (for every two electrons transferred, four hydrogen ions are translocated across the cytoplasmic membrane), and thus conserves the redox energy in a proton gradient. This chain is NADH-quinone oxidoreductase subunit I, found in Ehrlichia chaffeensis (strain ATCC CRL-10679 / Arkansas).